A 161-amino-acid polypeptide reads, in one-letter code: Nucleotide-binding protein LHK_01423 (161 aa).

The protein belongs to the YajQ family.

Functionally, nucleotide-binding protein. The protein is Nucleotide-binding protein LHK_01423 of Laribacter hongkongensis (strain HLHK9).